Here is a 427-residue protein sequence, read N- to C-terminus: DEAD-box ATP-dependent RNA helicase 56 (427 aa).

The disordered stretch occupies residues 1-30 (MGDARDNEAYEEELLDYEEEDEKVPDSGNK). The segment covering 9–23 (AYEEELLDYEEEDEK) has biased composition (acidic residues). The Q motif signature appears at 46 to 74 (SGFRDFLLKPELLRAIVDSGFEHPSEVQH). The Helicase ATP-binding domain occupies 77-250 (IPQAILGMDV…KKFMQDPMEI (174 aa)). 90-97 (AKSGMGKT) serves as a coordination point for ATP. The short motif at 197–200 (DECD) is the DECD box element. A Helicase C-terminal domain is found at 278–423 (KLNDLLDALD…ELPEQIDTST (146 aa)).

This sequence belongs to the DEAD box helicase family. DECD subfamily. As to quaternary structure, interacts with ALY2 and MOS11.

It localises to the nucleus. It carries out the reaction ATP + H2O = ADP + phosphate + H(+). ATP-dependent RNA helicase involved in pre-mRNA splicing. Required for the export of mRNA out of the nucleus. In addition to ssRNA and dsRNA, binds dsDNA, but not ssDNA. This chain is DEAD-box ATP-dependent RNA helicase 56 (RH56), found in Arabidopsis thaliana (Mouse-ear cress).